The primary structure comprises 150 residues: MAPKKKEVTRIAKLNLIGGQAKPGPALASVGINMAEFTKSFNDKTKDQNGKVIPVIITAYKDKSFDYVVKTTPVTYLLKDAAKIKSGAKDPKKQVVATISKEQALEIARYKLVDMTAYDEEAALRMIAGSAKQMGIAIEGVSAYKEKKGN.

It belongs to the universal ribosomal protein uL11 family. In terms of assembly, part of the ribosomal stalk of the 50S ribosomal subunit. Interacts with L10 and the large rRNA to form the base of the stalk. L10 forms an elongated spine to which L12 dimers bind in a sequential fashion forming a multimeric L10(L12)X complex. Post-translationally, one or more lysine residues are methylated.

Forms part of the ribosomal stalk which helps the ribosome interact with GTP-bound translation factors. This is Large ribosomal subunit protein uL11 from Ureaplasma urealyticum serovar 10 (strain ATCC 33699 / Western).